We begin with the raw amino-acid sequence, 516 residues long: Sodium channel protein Nach (516 aa).

The Cytoplasmic segment spans residues 1-49 (MGHEEELSPEQVDLKVSPLMGSLKRTWNDFCATSSIHGLRYTRDEDTNR). Residues 50 to 70 (IVHFVWLLISLVMFICAVVMA) form a helical membrane-spanning segment. Topologically, residues 71 to 452 (RTFYIDFRSN…LVSNLGSAFS (382 aa)) are extracellular. N-linked (GlcNAc...) asparagine glycosylation is found at N128, N165, N220, and N348. A helical membrane pass occupies residues 453–473 (LFVGMSMLSVVEIMYYFSVIL). Over 474–516 (RKNYVLECEARKKMLHKGPKFAWPKANDSHSKHQKSVFIIHKM) the chain is Cytoplasmic.

The protein belongs to the amiloride-sensitive sodium channel (TC 1.A.6) family.

It is found in the membrane. Part of a complex that plays a role in tracheal liquid clearance. Probable role in sodium transport. The chain is Sodium channel protein Nach (Nach) from Drosophila ananassae (Fruit fly).